Reading from the N-terminus, the 392-residue chain is Formate-dependent phosphoribosylglycinamide formyltransferase (392 aa).

Residues 22-23 (EL) and Glu-82 contribute to the N(1)-(5-phospho-beta-D-ribosyl)glycinamide site. ATP contacts are provided by residues Arg-114, Lys-155, 160-165 (SSGKGQ), 195-198 (EGVV), and Glu-203. The region spanning 119 to 308 (RLAAEELQLP…EFALHVRAFL (190 aa)) is the ATP-grasp domain. Mg(2+)-binding residues include Glu-267 and Glu-279. Residues Asp-286, Lys-355, and 362-363 (RR) contribute to the N(1)-(5-phospho-beta-D-ribosyl)glycinamide site.

It belongs to the PurK/PurT family. Homodimer.

It catalyses the reaction N(1)-(5-phospho-beta-D-ribosyl)glycinamide + formate + ATP = N(2)-formyl-N(1)-(5-phospho-beta-D-ribosyl)glycinamide + ADP + phosphate + H(+). It participates in purine metabolism; IMP biosynthesis via de novo pathway; N(2)-formyl-N(1)-(5-phospho-D-ribosyl)glycinamide from N(1)-(5-phospho-D-ribosyl)glycinamide (formate route): step 1/1. In terms of biological role, involved in the de novo purine biosynthesis. Catalyzes the transfer of formate to 5-phospho-ribosyl-glycinamide (GAR), producing 5-phospho-ribosyl-N-formylglycinamide (FGAR). Formate is provided by PurU via hydrolysis of 10-formyl-tetrahydrofolate. The chain is Formate-dependent phosphoribosylglycinamide formyltransferase from Shigella boydii serotype 4 (strain Sb227).